A 210-amino-acid polypeptide reads, in one-letter code: Syntaxin-binding protein 6 (210 aa).

Position 2 is an N-acetylserine (Ser-2). A v-SNARE coiled-coil homology domain is found at 151–210 (GNSILHSAADSVTSAVQKASQALNERGERLGRAEEKTEDLKNSAQQFAETAHKLAMKHKC).

As to quaternary structure, part of a ternary complex containing SNAP25 and STX1A that can be dissociated by NAPA and NSF. Interacts with STX4A. As to expression, detected at low levels in brain, and at very low levels in heart, adrenal gland, testis, liver and kidney.

Its subcellular location is the cytoplasm. It is found in the membrane. Forms non-fusogenic complexes with SNAP25 and STX1A and may thereby modulate the formation of functional SNARE complexes and exocytosis. The polypeptide is Syntaxin-binding protein 6 (STXBP6) (Homo sapiens (Human)).